The following is a 140-amino-acid chain: Sec-independent protein translocase protein TatB (140 aa).

The chain crosses the membrane as a helical span at residues 1 to 21 (MFDIGFSELLLIAVVALVVLG). The segment at 119 to 140 (VHVTSPPPSTSTHGNNGQEKSQ) is disordered. The segment covering 128–140 (TSTHGNNGQEKSQ) has biased composition (polar residues).

This sequence belongs to the TatB family. The Tat system comprises two distinct complexes: a TatABC complex, containing multiple copies of TatA, TatB and TatC subunits, and a separate TatA complex, containing only TatA subunits. Substrates initially bind to the TatABC complex, which probably triggers association of the separate TatA complex to form the active translocon.

It localises to the cell inner membrane. Part of the twin-arginine translocation (Tat) system that transports large folded proteins containing a characteristic twin-arginine motif in their signal peptide across membranes. Together with TatC, TatB is part of a receptor directly interacting with Tat signal peptides. TatB may form an oligomeric binding site that transiently accommodates folded Tat precursor proteins before their translocation. The chain is Sec-independent protein translocase protein TatB from Xylella fastidiosa (strain 9a5c).